Here is a 186-residue protein sequence, read N- to C-terminus: Elongation factor P (186 aa).

It belongs to the elongation factor P family.

Its subcellular location is the cytoplasm. The protein operates within protein biosynthesis; polypeptide chain elongation. Involved in peptide bond synthesis. Stimulates efficient translation and peptide-bond synthesis on native or reconstituted 70S ribosomes in vitro. Probably functions indirectly by altering the affinity of the ribosome for aminoacyl-tRNA, thus increasing their reactivity as acceptors for peptidyl transferase. The chain is Elongation factor P from Shewanella woodyi (strain ATCC 51908 / MS32).